Here is a 1024-residue protein sequence, read N- to C-terminus: Error-prone DNA polymerase (1024 aa).

It belongs to the DNA polymerase type-C family. DnaE2 subfamily.

The protein resides in the cytoplasm. The catalysed reaction is DNA(n) + a 2'-deoxyribonucleoside 5'-triphosphate = DNA(n+1) + diphosphate. Its function is as follows. DNA polymerase involved in damage-induced mutagenesis and translesion synthesis (TLS). It is not the major replicative DNA polymerase. The sequence is that of Error-prone DNA polymerase from Vibrio campbellii (strain ATCC BAA-1116).